The sequence spans 137 residues: uncharacterized protein (137 aa).

Positions 116–137 (ARPPRGSGGTRTARNGARTASE) are disordered. Positions 125–137 (TRTARNGARTASE) are enriched in polar residues.

This is an uncharacterized protein from Mycobacterium bovis (strain ATCC BAA-935 / AF2122/97).